The following is a 29-amino-acid chain: Omega-conotoxins GVIIA/GVIIB (29 aa).

3 disulfides stabilise this stretch: cysteine 1–cysteine 16, cysteine 8–cysteine 19, and cysteine 15–cysteine 26. 2 positions are modified to 4-hydroxyproline: proline 4 and proline 7.

As to expression, expressed by the venom duct.

Its subcellular location is the secreted. Omega-conotoxins act at presynaptic membranes, they bind and block voltage-gated calcium channels (Cav). The protein is Omega-conotoxins GVIIA/GVIIB of Conus geographus (Geography cone).